The following is a 151-amino-acid chain: Protein Turandot Z (151 aa).

Residues 1-23 form the signal peptide; that stretch reads MSRLIHLSFVLALLACLTGTISA.

It belongs to the Turandot family.

It is found in the secreted. Functionally, a humoral factor that may play a role in stress tolerance. This Drosophila persimilis (Fruit fly) protein is Protein Turandot Z.